A 1293-amino-acid chain; its full sequence is DNA-directed RNA polymerase subunit beta' (1293 aa).

Residues cysteine 60, cysteine 62, cysteine 75, and cysteine 78 each contribute to the Zn(2+) site. Mg(2+)-binding residues include aspartate 535, aspartate 537, and aspartate 539. The Zn(2+) site is built by cysteine 873, cysteine 950, cysteine 957, and cysteine 960.

It belongs to the RNA polymerase beta' chain family. As to quaternary structure, the RNAP catalytic core consists of 2 alpha, 1 beta, 1 beta' and 1 omega subunit. When a sigma factor is associated with the core the holoenzyme is formed, which can initiate transcription. Mg(2+) is required as a cofactor. Requires Zn(2+) as cofactor.

The enzyme catalyses RNA(n) + a ribonucleoside 5'-triphosphate = RNA(n+1) + diphosphate. In terms of biological role, DNA-dependent RNA polymerase catalyzes the transcription of DNA into RNA using the four ribonucleoside triphosphates as substrates. In Cutibacterium acnes (strain DSM 16379 / KPA171202) (Propionibacterium acnes), this protein is DNA-directed RNA polymerase subunit beta'.